Reading from the N-terminus, the 590-residue chain is Potassium-transporting ATPase potassium-binding subunit (590 aa).

Transmembrane regions (helical) follow at residues 3–23 (AFLL…RPLG), 63–83 (HYAL…YALQ), 134–154 (GLAV…IALI), and 177–197 (LYVL…QGAI). The tract at residues 217 to 244 (PKTDAQGNPIKDAQGNPVTEKATTQKQT) is disordered. Transmembrane regions (helical) follow at residues 284-304 (FVQM…FGAM), 312-332 (WAVL…EMWA), 359-379 (FGVV…CGAV), 388-408 (ALGG…FGGV), 411-431 (GLYG…LMIG), 450-470 (SIAI…AVLA), 515-535 (VALG…VLAM), and 558-578 (LFVV…YIPA).

Belongs to the KdpA family. As to quaternary structure, the system is composed of three essential subunits: KdpA, KdpB and KdpC.

The protein resides in the cell inner membrane. In terms of biological role, part of the high-affinity ATP-driven potassium transport (or Kdp) system, which catalyzes the hydrolysis of ATP coupled with the electrogenic transport of potassium into the cytoplasm. This subunit binds the periplasmic potassium ions and delivers the ions to the membrane domain of KdpB through an intramembrane tunnel. The sequence is that of Potassium-transporting ATPase potassium-binding subunit from Ralstonia nicotianae (strain ATCC BAA-1114 / GMI1000) (Ralstonia solanacearum).